Here is a 361-residue protein sequence, read N- to C-terminus: Chorismate synthase (361 aa).

Residues Arg-48 and Arg-54 each contribute to the NADP(+) site. FMN is bound by residues 125–127, 238–239, Gly-278, 293–297, and Arg-319; these read RSS, NA, and KPTSS.

It belongs to the chorismate synthase family. Homotetramer. It depends on FMNH2 as a cofactor.

It carries out the reaction 5-O-(1-carboxyvinyl)-3-phosphoshikimate = chorismate + phosphate. The protein operates within metabolic intermediate biosynthesis; chorismate biosynthesis; chorismate from D-erythrose 4-phosphate and phosphoenolpyruvate: step 7/7. Functionally, catalyzes the anti-1,4-elimination of the C-3 phosphate and the C-6 proR hydrogen from 5-enolpyruvylshikimate-3-phosphate (EPSP) to yield chorismate, which is the branch point compound that serves as the starting substrate for the three terminal pathways of aromatic amino acid biosynthesis. This reaction introduces a second double bond into the aromatic ring system. This Vibrio parahaemolyticus serotype O3:K6 (strain RIMD 2210633) protein is Chorismate synthase.